We begin with the raw amino-acid sequence, 179 residues long: Large ribosomal subunit protein uL5 (179 aa).

This sequence belongs to the universal ribosomal protein uL5 family. In terms of assembly, part of the 50S ribosomal subunit; part of the 5S rRNA/L5/L18/L25 subcomplex. Contacts the 5S rRNA and the P site tRNA. Forms a bridge to the 30S subunit in the 70S ribosome.

Its function is as follows. This is one of the proteins that bind and probably mediate the attachment of the 5S RNA into the large ribosomal subunit, where it forms part of the central protuberance. In the 70S ribosome it contacts protein S13 of the 30S subunit (bridge B1b), connecting the 2 subunits; this bridge is implicated in subunit movement. Contacts the P site tRNA; the 5S rRNA and some of its associated proteins might help stabilize positioning of ribosome-bound tRNAs. This is Large ribosomal subunit protein uL5 from Rickettsia rickettsii (strain Iowa).